We begin with the raw amino-acid sequence, 1187 residues long: Non-receptor tyrosine-protein kinase TYK2 (1187 aa).

The region spanning 26-431 (GGLKVLLHWA…GYFRLTADSS (406 aa)) is the FERM domain. Y292 bears the Phosphotyrosine mark. The tract at residues 335 to 366 (KEEGSSGSSGRNPQASLFGKKAKAHKAVGQPA) is disordered. Residues 339-349 (SSGSSGRNPQA) are compositionally biased toward polar residues. Residues 450–529 (GIHGPLLEPF…GRSFPSVREL (80 aa)) form the SH2; atypical domain. Residues S499 and S525 each carry the phosphoserine modification. A Protein kinase 1 domain is found at 589-875 (ITQLSHLGQG…LTRLQPHNLA (287 aa)). Y604 is modified (phosphotyrosine). Residues 610–629 (VEGSGDPEEGKMDDEDPLVP) form a disordered region. Residues 614 to 626 (GDPEEGKMDDEDP) are compositionally biased toward acidic residues. The residue at position 884 (S884) is a Phosphoserine. In terms of domain architecture, Protein kinase 2 spans 897 to 1176 (LKKIRDLGEG…PILKTVHEKY (280 aa)). Residues 903-911 (LGEGHFGKV) and K930 contribute to the ATP site. D1023 functions as the Proton acceptor in the catalytic mechanism. Position 1054 is a phosphotyrosine; by autocatalysis (Y1054). Y1055 is subject to Phosphotyrosine.

Belongs to the protein kinase superfamily. Tyr protein kinase family. JAK subfamily. Interacts (via FERM domain) with JAKMIP1. Interacts with PIK3R1; this interaction is important for cell migration. Interacts with MPL/TPOR. As to quaternary structure, (Microbial infection) Interacts with Epstein-Barr virus protein LMP1; this interaction inhibits TYK2-mediated interferon signaling. In terms of assembly, (Microbial infection) Interacts with papillomavirus-18 protein E6; this interaction impairs JAK-STAT activation by interferon-alpha. (Microbial infection) Interacts with Epstein-Barr virus (EBV) tegument protein BGLF2; this interaction participates in the inhibition of type I IFN signaling by the virus. Phosphorylated. Phosphorylation by JAK1 at Tyr-1054 and Tyr-1055 induces kinase activation. In terms of tissue distribution, observed in all cell lines analyzed. Expressed in a variety of lymphoid and non-lymphoid cell lines.

The enzyme catalyses L-tyrosyl-[protein] + ATP = O-phospho-L-tyrosyl-[protein] + ADP + H(+). The protein kinase 1 domain (also termed pseudokinase domain) mediates autoinhibition of the TYK2 kinase domain. Its function is as follows. Tyrosine kinase of the non-receptor type involved in numerous cytokines and interferons signaling, which regulates cell growth, development, cell migration, innate and adaptive immunity. Plays both structural and catalytic roles in numerous interleukins and interferons (IFN-alpha/beta) signaling. Associates with heterodimeric cytokine receptor complexes and activates STAT family members including STAT1, STAT3, STAT4 or STAT6. The heterodimeric cytokine receptor complexes are composed of (1) a TYK2-associated receptor chain (IFNAR1, IL12RB1, IL10RB or IL13RA1), and (2) a second receptor chain associated either with JAK1 or JAK2. In response to cytokine-binding to receptors, phosphorylates and activates receptors (IFNAR1, IL12RB1, IL10RB or IL13RA1), creating docking sites for STAT members. In turn, recruited STATs are phosphorylated by TYK2 (or JAK1/JAK2 on the second receptor chain), form homo- and heterodimers, translocate to the nucleus, and regulate cytokine/growth factor responsive genes. Negatively regulates STAT3 activity by promototing phosphorylation at a specific tyrosine that differs from the site used for signaling. In Homo sapiens (Human), this protein is Non-receptor tyrosine-protein kinase TYK2 (TYK2).